A 239-amino-acid chain; its full sequence is MQFSFLTLFPTLIESYFTDSILKRALQNGLISVEALNIRDYALDKYQKVDEPPISGGAGQVIRADVLGAALQTLTHSHIIFLSPCGKPFQQYDALRLSHKKHITFVCGRYEGFDERLVEQYANEVMSVGNFIVTGGELPALMLCDSIARHIQGVLGNADSLQGESFEDYLLEAPNFTKIFNQKIKFSATPSEYSKGNHSKISGLKKRLAICKTKYFRPDLYQAYRVFIEQQQLNNKVVK.

Residues glycine 108 and 128 to 133 each bind S-adenosyl-L-methionine; that span reads VGNFIV.

The protein belongs to the RNA methyltransferase TrmD family. In terms of assembly, homodimer.

The protein resides in the cytoplasm. It catalyses the reaction guanosine(37) in tRNA + S-adenosyl-L-methionine = N(1)-methylguanosine(37) in tRNA + S-adenosyl-L-homocysteine + H(+). Its function is as follows. Specifically methylates guanosine-37 in various tRNAs. The protein is tRNA (guanine-N(1)-)-methyltransferase of Helicobacter hepaticus (strain ATCC 51449 / 3B1).